We begin with the raw amino-acid sequence, 297 residues long: Formylmethanofuran--tetrahydromethanopterin formyltransferase (297 aa).

It belongs to the FTR family. Homotetramer.

It is found in the cytoplasm. It catalyses the reaction N-formylmethanofuran + 5,6,7,8-tetrahydromethanopterin + H(+) = N(5)-formyl-5,6,7,8-tetrahydromethanopterin + methanofuran. Its pathway is one-carbon metabolism; methanogenesis from CO(2); 5,10-methenyl-5,6,7,8-tetrahydromethanopterin from CO(2): step 2/3. In terms of biological role, catalyzes the reversible transfer of a formyl group from formylmethanofuran (formyl-MFR) to tetrahydromethanopterin (H(4)MPT) to produce 5-formyl tetrahydromethanopterin (5-formyl-H(4)MPT) and methanofuran (MFR). The sequence is that of Formylmethanofuran--tetrahydromethanopterin formyltransferase from Methanothermus fervidus (strain ATCC 43054 / DSM 2088 / JCM 10308 / V24 S).